A 416-amino-acid polypeptide reads, in one-letter code: Peptide chain release factor subunit 1 (416 aa).

The protein belongs to the eukaryotic release factor 1 family. In terms of assembly, heterodimer of two subunits, one of which binds GTP.

The protein resides in the cytoplasm. Directs the termination of nascent peptide synthesis (translation) in response to the termination codons UAA, UAG and UGA. The protein is Peptide chain release factor subunit 1 of Haloquadratum walsbyi (strain DSM 16790 / HBSQ001).